Consider the following 86-residue polypeptide: Candiduxin-2 (86 aa).

The signal sequence occupies residues 1-21 (MKTLLLTLVVLTIACLDLGYT). Cystine bridges form between C24–C45, C38–C62, C66–C78, and C79–C84.

This sequence belongs to the three-finger toxin family. Short-chain subfamily. Orphan group IX sub-subfamily. Expressed by the venom gland.

It localises to the secreted. In Bungarus candidus (Malayan krait), this protein is Candiduxin-2.